A 670-amino-acid chain; its full sequence is DNA ligase (670 aa).

NAD(+)-binding positions include 34-38 (DAEYD), 84-85 (SL), 116-119 (EHKV), R139, E174, Y226, K291, and K315. K118 (N6-AMP-lysine intermediate) is an active-site residue. Residues C409, C412, C425, and C430 each coordinate Zn(2+). A BRCT domain is found at 586–670 (EVSDLLSGLT…LKEKGAPVPA (85 aa)).

Belongs to the NAD-dependent DNA ligase family. LigA subfamily. It depends on Mg(2+) as a cofactor.

It catalyses the reaction NAD(+) + (deoxyribonucleotide)n-3'-hydroxyl + 5'-phospho-(deoxyribonucleotide)m = (deoxyribonucleotide)n+m + AMP + beta-nicotinamide D-nucleotide.. DNA ligase that catalyzes the formation of phosphodiester linkages between 5'-phosphoryl and 3'-hydroxyl groups in double-stranded DNA using NAD as a coenzyme and as the energy source for the reaction. It is essential for DNA replication and repair of damaged DNA. In Thermus filiformis, this protein is DNA ligase.